The primary structure comprises 415 residues: Beta-1,4-glucuronyltransferase 1 (415 aa).

At 1–8 (MQMSYAIR) the chain is on the cytoplasmic side. Residues 9-36 (CAFYQLLLAALMLVAMLQLLYLSLLSGL) traverse the membrane as a helical; Signal-anchor for type II membrane protein segment. At 37–415 (HGQEEQDQYF…AKYPNSPRRC (379 aa)) the chain is on the lumenal side. N-linked (GlcNAc...) asparagine glycosylation occurs at Asn-204. 2 residues coordinate Mn(2+): Asp-227 and Asp-229. Asn-300 carries an N-linked (GlcNAc...) asparagine glycan.

Belongs to the glycosyltransferase 49 family. In terms of assembly, interacts with LARGE1 and LARGE2. It depends on Mn(2+) as a cofactor.

The protein resides in the golgi apparatus membrane. It carries out the reaction 3-O-[beta-D-Xyl-(1-&gt;4)-Rib-ol-P-Rib-ol-P-3-beta-D-GalNAc-(1-&gt;3)-beta-D-GlcNAc-(1-&gt;4)-(O-6-P-alpha-D-Man)]-Thr-[protein] + UDP-alpha-D-glucuronate = 3-O-[beta-D-GlcA-(1-&gt;3)-beta-D-Xyl-(1-&gt;4)-Rib-ol-P-Rib-ol-P-3-beta-D-GalNAc-(1-&gt;3)-beta-D-GlcNAc-(1-&gt;4)-(O-6-P-alpha-D-Man)]-Thr-[protein] + UDP + H(+). The protein operates within protein modification; protein glycosylation. Functionally, beta-1,4-glucuronyltransferase involved in O-mannosylation of alpha-dystroglycan (DAG1). Transfers a glucuronic acid (GlcA) residue onto a xylose (Xyl) acceptor to produce the glucuronyl-beta-1,4-xylose-beta disaccharide primer, which is further elongated by LARGE1, during synthesis of phosphorylated O-mannosyl glycan. Phosphorylated O-mannosyl glycan is a carbohydrate structure present in alpha-dystroglycan (DAG1), which is required for binding laminin G-like domain-containing extracellular proteins with high affinity. Required for axon guidance; via its function in O-mannosylation of alpha-dystroglycan (DAG1). In Pongo abelii (Sumatran orangutan), this protein is Beta-1,4-glucuronyltransferase 1.